Here is an 86-residue protein sequence, read N- to C-terminus: Cytochrome c6 (86 aa).

C14, C17, H18, and M58 together coordinate heme c.

Belongs to the cytochrome c family. PetJ subfamily. In terms of assembly, monomer. Post-translationally, binds 1 heme c group covalently per subunit.

The protein resides in the plastid. Its subcellular location is the chloroplast thylakoid lumen. Its function is as follows. Functions as an electron carrier between membrane-bound cytochrome b6-f and photosystem I in oxygenic photosynthesis. In Bumilleriopsis filiformis (Yellow-green alga), this protein is Cytochrome c6 (petJ).